Reading from the N-terminus, the 349-residue chain is Inositol 2-dehydrogenase (349 aa).

The protein belongs to the Gfo/Idh/MocA family. Homotetramer.

It carries out the reaction myo-inositol + NAD(+) = scyllo-inosose + NADH + H(+). In terms of biological role, involved in the oxidation of myo-inositol (MI) to 2-keto-myo-inositol (2KMI or 2-inosose). This is Inositol 2-dehydrogenase from Mycolicibacterium gilvum (strain PYR-GCK) (Mycobacterium gilvum (strain PYR-GCK)).